A 379-amino-acid polypeptide reads, in one-letter code: Cobalt-precorrin-5B C(1)-methyltransferase (379 aa).

The protein belongs to the CbiD family.

It carries out the reaction Co-precorrin-5B + S-adenosyl-L-methionine = Co-precorrin-6A + S-adenosyl-L-homocysteine. It functions in the pathway cofactor biosynthesis; adenosylcobalamin biosynthesis; cob(II)yrinate a,c-diamide from sirohydrochlorin (anaerobic route): step 6/10. Its function is as follows. Catalyzes the methylation of C-1 in cobalt-precorrin-5B to form cobalt-precorrin-6A. The sequence is that of Cobalt-precorrin-5B C(1)-methyltransferase from Salmonella typhi.